Consider the following 201-residue polypeptide: NADH-quinone oxidoreductase subunit C 1 (201 aa).

This sequence belongs to the complex I 30 kDa subunit family. As to quaternary structure, NDH-1 is composed of 14 different subunits. Subunits NuoB, C, D, E, F, and G constitute the peripheral sector of the complex.

It localises to the cell inner membrane. The catalysed reaction is a quinone + NADH + 5 H(+)(in) = a quinol + NAD(+) + 4 H(+)(out). In terms of biological role, NDH-1 shuttles electrons from NADH, via FMN and iron-sulfur (Fe-S) centers, to quinones in the respiratory chain. The immediate electron acceptor for the enzyme in this species is believed to be ubiquinone. Couples the redox reaction to proton translocation (for every two electrons transferred, four hydrogen ions are translocated across the cytoplasmic membrane), and thus conserves the redox energy in a proton gradient. The protein is NADH-quinone oxidoreductase subunit C 1 of Rhizobium meliloti (strain 1021) (Ensifer meliloti).